Consider the following 241-residue polypeptide: Gamma-interferon-inducible lysosomal thiol reductase-like protein (241 aa).

Residues 1-18 (MLFKSLLLLSVYAVTCYG) form the signal peptide. Residues N105 and N152 are each glycosylated (N-linked (GlcNAc...) asparagine). The helical transmembrane segment at 218–235 (STGSAISSLGMIVTVVAV) threads the bilayer.

It belongs to the GILT family. Salivary gland (at protein level). Low-level expression in midgut (at protein level). Expressed in head and leg tissues. Ovary. Fat body. In terms of tissue distribution, (Microbial infection) Detected with Plasmodium berghei sporozoites isolated from the saliva of infected Anopheles gambiae mosquitoes (at protein level).

Its subcellular location is the membrane. Functionally, required for normal development of ovary and testis. In terms of biological role, (Microbial infection) Interacts with the surface of Plasmodium berghei sporozoites. Reduces P.berghei sporozoite cell traversal activity and transmission. Limits the motility of P.berghei sporozoites. Decreases the levels of host liver infection by P.berghei sporozoites. Does not affect P.berghei sporozoite viability. Indirectly promotes P.berghei survival in mosquitoes by influencing ovarian development and the subsequent production of 20-hydroxyecdysone and vitellogenin, which, in turn, modulates TEP1-dependent parasite killing. Promotes P.berghei infection in mosquitoes, most likely impacting the oocyst stage of parasite development. Its function is as follows. (Microbial infection) Promotes Plasmodium falciparum survival in mosquitoes. The chain is Gamma-interferon-inducible lysosomal thiol reductase-like protein from Anopheles gambiae (African malaria mosquito).